A 616-amino-acid polypeptide reads, in one-letter code: MALLQISEPGLSAAPHQRRLAAGIDLGTTNSLVATVRSGQAETLADHEGRHLLPSVVHYQQQGHSVGYDARTNAALDTANTISSVKRLMGRSLADIQQRYPHLPYQFQASENGLPMIETAAGLLNPVRVSADILKALAARATEALAGELDGVVITVPAYFDDAQRQGTKDAARLAGLHVLRLLNEPTAAAIAYGLDSGQEGVIAVYDLGGGTFDISILRLSRGVFEVLATGGDSALGGDDFDHLLADYIREQADIPDRSDNRVQRELLDATIAAKIALSDADSVTVNVAGWQGEISREQFNELIAPLVKRTLLACRRALKDAGVEADEVLEVVMVGGSTRVPLVRERVGEFFGRPPLTSIDPDKVVAIGAAIQADILVGNKPDSEMLLLDVIPLSLGLETMGGLVEKVIPRNTTIPVARAQDFTTFKDGQTAMSIHVMQGERELVQDCRSLARFALRGIPALPAGGAHIRVTFQVDADGLLSVTAMEKSTGVEASIQVKPSYGLTDSEIASMIKDSMSYAEQDVKARMLAEQKVEAARVLESLHGALAADAALLSAAERQVIDNAAAHLSEVAQGDDVDAIEQAIKNVDKQTQDFAARRMDQSVRRALKGHSVDEV.

Belongs to the heat shock protein 70 family.

Chaperone involved in the maturation of iron-sulfur cluster-containing proteins. Has a low intrinsic ATPase activity which is markedly stimulated by HscB. Involved in the maturation of IscU. This Shigella flexneri serotype 5b (strain 8401) protein is Chaperone protein HscA.